We begin with the raw amino-acid sequence, 343 residues long: Zinc finger protein STP3 (343 aa).

Disordered stretches follow at residues 31-56 (YNGE…SGSA) and 71-140 (SNDV…KPRK). The span at 33 to 45 (GEASSASTHPTLP) shows a compositional bias: polar residues. Composition is skewed to low complexity over residues 46–56 (NMNISNGSGSA), 71–86 (SNDV…FLPS), and 94–120 (SASA…AGPS). A phosphoserine mark is found at S71 and S111. The segment at 169-191 (HKCPICHRGFARNNDLLRHKKRH) adopts a C2H2-type zinc-finger fold. A disordered region spans residues 198-222 (SQSGVLSNHNDGKGGSVSPNDDDTH).

The protein resides in the nucleus. The protein is Zinc finger protein STP3 (STP3) of Saccharomyces cerevisiae (strain ATCC 204508 / S288c) (Baker's yeast).